Reading from the N-terminus, the 420-residue chain is Serine protease inhibitor A3B (420 aa).

A signal peptide spans 1 to 17 (MAFIAALGLLMAEICPA). N-linked (GlcNAc...) asparagine glycosylation is found at Asn-104 and Asn-349. Positions 367–392 (GTEGDAITIVGYNFMSAKLKPVFVKF) are RCL.

This sequence belongs to the serpin family.

It is found in the secreted. The chain is Serine protease inhibitor A3B (Serpina3b) from Mus musculus (Mouse).